Reading from the N-terminus, the 454-residue chain is Bifunctional protein GlmU (454 aa).

The interval 1–226 is pyrophosphorylase; sequence MTTTVIILAA…AFEVEGVNDR (226 aa). Residues 8 to 11, lysine 22, glutamine 73, 78 to 79, 100 to 102, glycine 137, glutamate 151, asparagine 166, and asparagine 224 each bind UDP-N-acetyl-alpha-D-glucosamine; these read LAAG, GT, and YGD. Aspartate 102 is a binding site for Mg(2+). Residue asparagine 224 participates in Mg(2+) binding. The linker stretch occupies residues 227-247; the sequence is LQLAALEREFQLQQAKSLMQQ. The segment at 248–454 is N-acetyltransferase; the sequence is GVTLTDPSRF…NYQRPQKLKK (207 aa). UDP-N-acetyl-alpha-D-glucosamine is bound by residues arginine 330 and lysine 348. Catalysis depends on histidine 360, which acts as the Proton acceptor. UDP-N-acetyl-alpha-D-glucosamine is bound by residues tyrosine 363 and asparagine 374. Acetyl-CoA is bound by residues alanine 377, 383–384, serine 402, alanine 420, and arginine 437; that span reads NY.

The protein in the N-terminal section; belongs to the N-acetylglucosamine-1-phosphate uridyltransferase family. In the C-terminal section; belongs to the transferase hexapeptide repeat family. In terms of assembly, homotrimer. It depends on Mg(2+) as a cofactor.

The protein localises to the cytoplasm. It catalyses the reaction alpha-D-glucosamine 1-phosphate + acetyl-CoA = N-acetyl-alpha-D-glucosamine 1-phosphate + CoA + H(+). The catalysed reaction is N-acetyl-alpha-D-glucosamine 1-phosphate + UTP + H(+) = UDP-N-acetyl-alpha-D-glucosamine + diphosphate. Its pathway is nucleotide-sugar biosynthesis; UDP-N-acetyl-alpha-D-glucosamine biosynthesis; N-acetyl-alpha-D-glucosamine 1-phosphate from alpha-D-glucosamine 6-phosphate (route II): step 2/2. It functions in the pathway nucleotide-sugar biosynthesis; UDP-N-acetyl-alpha-D-glucosamine biosynthesis; UDP-N-acetyl-alpha-D-glucosamine from N-acetyl-alpha-D-glucosamine 1-phosphate: step 1/1. It participates in bacterial outer membrane biogenesis; LPS lipid A biosynthesis. Functionally, catalyzes the last two sequential reactions in the de novo biosynthetic pathway for UDP-N-acetylglucosamine (UDP-GlcNAc). The C-terminal domain catalyzes the transfer of acetyl group from acetyl coenzyme A to glucosamine-1-phosphate (GlcN-1-P) to produce N-acetylglucosamine-1-phosphate (GlcNAc-1-P), which is converted into UDP-GlcNAc by the transfer of uridine 5-monophosphate (from uridine 5-triphosphate), a reaction catalyzed by the N-terminal domain. The sequence is that of Bifunctional protein GlmU from Acinetobacter baylyi (strain ATCC 33305 / BD413 / ADP1).